Here is a 144-residue protein sequence, read N- to C-terminus: 3-hydroxyacyl-[acyl-carrier-protein] dehydratase FabZ (144 aa).

H48 is an active-site residue.

This sequence belongs to the thioester dehydratase family. FabZ subfamily.

The protein resides in the cytoplasm. The enzyme catalyses a (3R)-hydroxyacyl-[ACP] = a (2E)-enoyl-[ACP] + H2O. Involved in unsaturated fatty acids biosynthesis. Catalyzes the dehydration of short chain beta-hydroxyacyl-ACPs and long chain saturated and unsaturated beta-hydroxyacyl-ACPs. The protein is 3-hydroxyacyl-[acyl-carrier-protein] dehydratase FabZ of Listeria monocytogenes serotype 4b (strain CLIP80459).